The chain runs to 122 residues: Large ribosomal subunit protein uL14 (122 aa).

This sequence belongs to the universal ribosomal protein uL14 family. In terms of assembly, part of the 50S ribosomal subunit. Forms a cluster with proteins L3 and L19. In the 70S ribosome, L14 and L19 interact and together make contacts with the 16S rRNA in bridges B5 and B8.

Its function is as follows. Binds to 23S rRNA. Forms part of two intersubunit bridges in the 70S ribosome. In Shouchella clausii (strain KSM-K16) (Alkalihalobacillus clausii), this protein is Large ribosomal subunit protein uL14.